A 426-amino-acid chain; its full sequence is 3-phosphoshikimate 1-carboxyvinyltransferase (426 aa).

3-phosphoshikimate contacts are provided by Lys-20, Ser-21, and Arg-25. Lys-20 provides a ligand contact to phosphoenolpyruvate. Residues Gly-92 and Arg-120 each coordinate phosphoenolpyruvate. The 3-phosphoshikimate site is built by Ser-166, Gln-168, Asp-312, and Lys-339. Phosphoenolpyruvate is bound at residue Gln-168. Asp-312 (proton acceptor) is an active-site residue. Phosphoenolpyruvate-binding residues include Arg-343 and Arg-385.

This sequence belongs to the EPSP synthase family. In terms of assembly, monomer.

It localises to the cytoplasm. It carries out the reaction 3-phosphoshikimate + phosphoenolpyruvate = 5-O-(1-carboxyvinyl)-3-phosphoshikimate + phosphate. It participates in metabolic intermediate biosynthesis; chorismate biosynthesis; chorismate from D-erythrose 4-phosphate and phosphoenolpyruvate: step 6/7. Functionally, catalyzes the transfer of the enolpyruvyl moiety of phosphoenolpyruvate (PEP) to the 5-hydroxyl of shikimate-3-phosphate (S3P) to produce enolpyruvyl shikimate-3-phosphate and inorganic phosphate. In Enterococcus faecalis (strain ATCC 700802 / V583), this protein is 3-phosphoshikimate 1-carboxyvinyltransferase.